The primary structure comprises 1017 residues: Peroxisomal ATPase PEX6 (1017 aa).

An ATP-binding site is contributed by 758–765; it reads GPPGTGKT.

The protein belongs to the AAA ATPase family. Interacts with PEX1; forming the PEX1-PEX6 AAA ATPase complex, which is composed of a heterohexamer formed by a trimer of PEX1-PEX6 dimers.

It is found in the cytoplasm. It localises to the cytosol. Its subcellular location is the peroxisome membrane. It catalyses the reaction ATP + H2O = ADP + phosphate + H(+). Component of the PEX1-PEX6 AAA ATPase complex, a protein dislocase complex that mediates the ATP-dependent extraction of the PEX5 receptor from peroxisomal membranes, an essential step for PEX5 recycling. Specifically recognizes PEX5 monoubiquitinated at 'Cys-6', and pulls it out of the peroxisome lumen through the PEX2-PEX10-PEX12 retrotranslocation channel. Extraction by the PEX1-PEX6 AAA ATPase complex is accompanied by unfolding of the TPR repeats and release of bound cargo from PEX5. The protein is Peroxisomal ATPase PEX6 (PEX6) of Candida glabrata (strain ATCC 2001 / BCRC 20586 / JCM 3761 / NBRC 0622 / NRRL Y-65 / CBS 138) (Yeast).